Reading from the N-terminus, the 556-residue chain is 2-succinyl-5-enolpyruvyl-6-hydroxy-3-cyclohexene-1-carboxylate synthase (556 aa).

It belongs to the TPP enzyme family. MenD subfamily. Homodimer. Requires Mg(2+) as cofactor. The cofactor is Mn(2+). Thiamine diphosphate serves as cofactor.

The catalysed reaction is isochorismate + 2-oxoglutarate + H(+) = 5-enolpyruvoyl-6-hydroxy-2-succinyl-cyclohex-3-ene-1-carboxylate + CO2. It participates in quinol/quinone metabolism; 1,4-dihydroxy-2-naphthoate biosynthesis; 1,4-dihydroxy-2-naphthoate from chorismate: step 2/7. It functions in the pathway quinol/quinone metabolism; menaquinone biosynthesis. Functionally, catalyzes the thiamine diphosphate-dependent decarboxylation of 2-oxoglutarate and the subsequent addition of the resulting succinic semialdehyde-thiamine pyrophosphate anion to isochorismate to yield 2-succinyl-5-enolpyruvyl-6-hydroxy-3-cyclohexene-1-carboxylate (SEPHCHC). The polypeptide is 2-succinyl-5-enolpyruvyl-6-hydroxy-3-cyclohexene-1-carboxylate synthase (Escherichia coli (strain UTI89 / UPEC)).